The primary structure comprises 21 residues: Phospholipase A2 crotoxin basic chain (21 aa).

The protein belongs to the phospholipase A2 family. Group II subfamily. The cofactor is Ca(2+). Expressed by the venom gland.

The protein resides in the secreted. It carries out the reaction a 1,2-diacyl-sn-glycero-3-phosphocholine + H2O = a 1-acyl-sn-glycero-3-phosphocholine + a fatty acid + H(+). Functionally, snake venom phospholipase A2 (PLA2) that induces a conspicuous local myotoxic effect and moderate footpad edema. In vitro, it shows anticoagulant effects and is not cytotoxic on myoblast but is able to lyse myotubes. PLA2 catalyzes the calcium-dependent hydrolysis of the 2-acyl groups in 3-sn-phosphoglycerides. The chain is Phospholipase A2 crotoxin basic chain from Crotalus durissus cumanensis (South American rattlesnake).